A 381-amino-acid chain; its full sequence is Gas vesicle protein C (381 aa).

7 consecutive repeat copies span residues 22-59, 60-84, 85-122, 123-160, 161-192, 193-232, and 233-274. The 7 X approximate tandem repeats stretch occupies residues 22–274; that stretch reads QAFAAYADEF…TETEVDIPPI (253 aa). The segment at 261–333 is disordered; that stretch reads AVTGTETEVD…EDDQFLDDET (73 aa). The segment covering 276 to 318 has biased composition (acidic residues); sequence DSVEPDGEDEDSKADDVEAEAEVETVEMEFGAEMDTEADEDVQ.

Belongs to the halobacterial gas vesicle GvpC family. Post-translationally, detected as 2 slightly different sizes in vivo; the proteins appears larger in SDS-PAGE probably due to the acidic tail.

The protein localises to the gas vesicle. Functionally, confers stability, involved in shaping gas vesicles (GV), hollow, gas filled proteinaceous nanostructures found in some microorganisms. They allow positioning of halobacteria at the optimal depth for growth in the poorly aerated, shallow brine pools of their habitat. In terms of biological role, expression of a 9.5 kb mc-vac DNA fragment containing 2 divergently transcribed regions (gvpD-gvpE-gvpF-gvpG-gvpH-gvpI-gvpJ-gvpK-gvpL-gvpM and gvpA-gvpC-gvpN-gvpO) allows H.volcanii to produce gas vesicles. The polypeptide is Gas vesicle protein C (Haloferax mediterranei (strain ATCC 33500 / DSM 1411 / JCM 8866 / NBRC 14739 / NCIMB 2177 / R-4) (Halobacterium mediterranei)).